We begin with the raw amino-acid sequence, 205 residues long: Type III pantothenate kinase (205 aa).

Residue 5–12 (DIGNTTYH) coordinates ATP. Substrate-binding positions include tyrosine 68 and 72 to 75 (GIDR). Aspartate 74 serves as the catalytic Proton acceptor. Aspartate 89 lines the K(+) pocket. Serine 92 provides a ligand contact to ATP. Serine 144 lines the substrate pocket.

The protein belongs to the type III pantothenate kinase family. As to quaternary structure, homodimer. The cofactor is NH4(+). K(+) is required as a cofactor.

It is found in the cytoplasm. The catalysed reaction is (R)-pantothenate + ATP = (R)-4'-phosphopantothenate + ADP + H(+). The protein operates within cofactor biosynthesis; coenzyme A biosynthesis; CoA from (R)-pantothenate: step 1/5. In terms of biological role, catalyzes the phosphorylation of pantothenate (Pan), the first step in CoA biosynthesis. This is Type III pantothenate kinase from Sulfurimonas denitrificans (strain ATCC 33889 / DSM 1251) (Thiomicrospira denitrificans (strain ATCC 33889 / DSM 1251)).